The chain runs to 71 residues: Exodeoxyribonuclease 7 small subunit (71 aa).

Belongs to the XseB family. As to quaternary structure, heterooligomer composed of large and small subunits.

Its subcellular location is the cytoplasm. It carries out the reaction Exonucleolytic cleavage in either 5'- to 3'- or 3'- to 5'-direction to yield nucleoside 5'-phosphates.. Bidirectionally degrades single-stranded DNA into large acid-insoluble oligonucleotides, which are then degraded further into small acid-soluble oligonucleotides. The sequence is that of Exodeoxyribonuclease 7 small subunit from Clostridium botulinum (strain ATCC 19397 / Type A).